Consider the following 302-residue polypeptide: Aspartate carbamoyltransferase catalytic subunit (302 aa).

2 residues coordinate carbamoyl phosphate: Arg-49 and Thr-50. An L-aspartate-binding site is contributed by Lys-77. Positions 99, 126, and 129 each coordinate carbamoyl phosphate. 2 residues coordinate L-aspartate: Arg-159 and Arg-209. Carbamoyl phosphate contacts are provided by Ala-250 and Pro-251.

Belongs to the aspartate/ornithine carbamoyltransferase superfamily. ATCase family. As to quaternary structure, heterododecamer (2C3:3R2) of six catalytic PyrB chains organized as two trimers (C3), and six regulatory PyrI chains organized as three dimers (R2).

It carries out the reaction carbamoyl phosphate + L-aspartate = N-carbamoyl-L-aspartate + phosphate + H(+). The protein operates within pyrimidine metabolism; UMP biosynthesis via de novo pathway; (S)-dihydroorotate from bicarbonate: step 2/3. In terms of biological role, catalyzes the condensation of carbamoyl phosphate and aspartate to form carbamoyl aspartate and inorganic phosphate, the committed step in the de novo pyrimidine nucleotide biosynthesis pathway. The sequence is that of Aspartate carbamoyltransferase catalytic subunit from Staphylococcus carnosus (strain TM300).